Consider the following 161-residue polypeptide: Regulatory protein RecX (161 aa).

The protein belongs to the RecX family.

It is found in the cytoplasm. Functionally, modulates RecA activity. In Halorhodospira halophila (strain DSM 244 / SL1) (Ectothiorhodospira halophila (strain DSM 244 / SL1)), this protein is Regulatory protein RecX.